Here is a 331-residue protein sequence, read N- to C-terminus: Adenosine deaminase (331 aa).

The Zn(2+) site is built by His-12 and His-14. Positions 14, 16, and 170 each coordinate substrate. A Zn(2+)-binding site is contributed by His-197. Glu-200 serves as the catalytic Proton donor. Zn(2+) is bound at residue Asp-278. Residue Asp-279 participates in substrate binding.

The protein belongs to the metallo-dependent hydrolases superfamily. Adenosine and AMP deaminases family. Adenosine deaminase subfamily. It depends on Zn(2+) as a cofactor.

It carries out the reaction adenosine + H2O + H(+) = inosine + NH4(+). It catalyses the reaction 2'-deoxyadenosine + H2O + H(+) = 2'-deoxyinosine + NH4(+). Its function is as follows. Catalyzes the hydrolytic deamination of adenosine and 2-deoxyadenosine. In Shewanella sp. (strain MR-7), this protein is Adenosine deaminase.